The primary structure comprises 213 residues: Homeobox protein koza (213 aa).

Residues 24-72 (ILSHMGPGSKEKSLGFPKTDQDQDSSLRDTEEKYASEKLQSSSQPAEIH) form a disordered region. Residues 32 to 59 (SKEKSLGFPKTDQDQDSSLRDTEEKYAS) show a composition bias toward basic and acidic residues. The segment at residues 102-161 (QKRSRAAFSHSQVIELERKFSSQKYLSAPERAQLAKSLKLTETQVKIWFQNRRYKTKRKQ) is a DNA-binding region (homeobox).

Belongs to the NK-3 homeobox family. Expressed in the muscle layer of embryonic somites. In tailbud embryos, expressed throughout the entire myotome but at the mid-tailbud stage (stage 32), expression becomes restricted to the outer periphery of the somite so that by the tadpole stage only the outer, type I cells show expression. Also expressed in the dorsal cement gland and in the myocardial layer of the developing heart. In all tissues, expression begins after terminal differentiation.

It is found in the nucleus. Its function is as follows. May regulate cell proliferation in a tissue-specific manner. In Xenopus laevis (African clawed frog), this protein is Homeobox protein koza.